Consider the following 76-residue polypeptide: Omega-conotoxin-like TxMKLT1-0211 (76 aa).

A signal peptide spans 1–22; sequence MKLTCMMIVAVLFLTAWTFVTA. Residues 23–52 constitute a propeptide that is removed on maturation; sequence VPHSSNALENLYLKAHHEMNNPEDSELNKR. 3 cysteine pairs are disulfide-bonded: Cys53–Cys67, Cys60–Cys71, and Cys66–Cys75.

Belongs to the conotoxin O1 superfamily. Expressed by the venom duct.

Its subcellular location is the secreted. Functionally, omega-conotoxins act at presynaptic membranes, they bind and block voltage-gated calcium channels (Cav). In Conus textile (Cloth-of-gold cone), this protein is Omega-conotoxin-like TxMKLT1-0211.